The sequence spans 397 residues: Anhydro-N-acetylmuramic acid kinase (397 aa).

9–16 contributes to the ATP binding site; that stretch reads GTSYDAID.

The protein belongs to the anhydro-N-acetylmuramic acid kinase family.

The catalysed reaction is 1,6-anhydro-N-acetyl-beta-muramate + ATP + H2O = N-acetyl-D-muramate 6-phosphate + ADP + H(+). It functions in the pathway amino-sugar metabolism; 1,6-anhydro-N-acetylmuramate degradation. It participates in cell wall biogenesis; peptidoglycan recycling. Functionally, catalyzes the specific phosphorylation of 1,6-anhydro-N-acetylmuramic acid (anhMurNAc) with the simultaneous cleavage of the 1,6-anhydro ring, generating MurNAc-6-P. Is required for the utilization of anhMurNAc either imported from the medium or derived from its own cell wall murein, and thus plays a role in cell wall recycling. This chain is Anhydro-N-acetylmuramic acid kinase, found in Rhodococcus erythropolis (strain PR4 / NBRC 100887).